The sequence spans 314 residues: tRNA pseudouridine synthase B (314 aa).

Substrate is bound at residue His43. Catalysis depends on Asp48, which acts as the Nucleophile. Tyr76, Tyr179, and Leu200 together coordinate substrate.

This sequence belongs to the pseudouridine synthase TruB family. Type 1 subfamily.

It catalyses the reaction uridine(55) in tRNA = pseudouridine(55) in tRNA. Functionally, responsible for synthesis of pseudouridine from uracil-55 in the psi GC loop of transfer RNAs. The protein is tRNA pseudouridine synthase B of Serratia proteamaculans (strain 568).